The primary structure comprises 152 residues: Arginine repressor (152 aa).

This sequence belongs to the ArgR family.

Its subcellular location is the cytoplasm. Its pathway is amino-acid biosynthesis; L-arginine biosynthesis [regulation]. Functionally, regulates arginine biosynthesis genes. The sequence is that of Arginine repressor from Caldicellulosiruptor saccharolyticus (strain ATCC 43494 / DSM 8903 / Tp8T 6331).